The following is a 138-amino-acid chain: Basic phospholipase A2 PLA-B' (138 aa).

The N-terminal stretch at 1–16 (MRTLWITAVLLVGVEG) is a signal peptide. Intrachain disulfides connect Cys42-Cys131, Cys44-Cys60, Cys59-Cys111, Cys65-Cys138, Cys66-Cys104, Cys73-Cys97, and Cys91-Cys102. Ca(2+) contacts are provided by Tyr43, Gly45, and Gly47. Residue His63 is part of the active site. Asp64 contributes to the Ca(2+) binding site. The active site involves Asp105.

Belongs to the phospholipase A2 family. Group II subfamily. D49 sub-subfamily. Ca(2+) is required as a cofactor. Expressed by the venom gland.

It localises to the secreted. It carries out the reaction a 1,2-diacyl-sn-glycero-3-phosphocholine + H2O = a 1-acyl-sn-glycero-3-phosphocholine + a fatty acid + H(+). Its function is as follows. PLA2 catalyzes the calcium-dependent hydrolysis of the 2-acyl groups in 3-sn-phosphoglycerides. The chain is Basic phospholipase A2 PLA-B' from Protobothrops flavoviridis (Habu).